A 158-amino-acid polypeptide reads, in one-letter code: MVVRTGTCSFCEYRIYPGRGQRFIAKDGRGFFFLTKKAKCLSLRKVKAQKITWTIARRRLWKKVKATDIAQKKKKRNVTVARAIVGISLEEINRRKNLDASHKKAEAEKAVRELKQKKANDIEKKRADRKLQGKDVKAAKKAETKKTKQPVGAKGGKK.

The span at 98–146 (LDASHKKAEAEKAVRELKQKKANDIEKKRADRKLQGKDVKAAKKAETKK) shows a compositional bias: basic and acidic residues. The disordered stretch occupies residues 98 to 158 (LDASHKKAEA…QPVGAKGGKK (61 aa)).

The protein belongs to the eukaryotic ribosomal protein eL24 family.

The chain is Large ribosomal subunit protein eL24 (RPL24) from Tetrahymena thermophila (strain SB210).